Consider the following 127-residue polypeptide: Flagellar hook-basal body complex protein FliE (127 aa).

This sequence belongs to the FliE family.

Its subcellular location is the bacterial flagellum basal body. This Leptospira interrogans serogroup Icterohaemorrhagiae serovar copenhageni (strain Fiocruz L1-130) protein is Flagellar hook-basal body complex protein FliE.